Consider the following 207-residue polypeptide: Imidazoleglycerol-phosphate dehydratase (207 aa).

Belongs to the imidazoleglycerol-phosphate dehydratase family.

The protein localises to the cytoplasm. It catalyses the reaction D-erythro-1-(imidazol-4-yl)glycerol 3-phosphate = 3-(imidazol-4-yl)-2-oxopropyl phosphate + H2O. Its pathway is amino-acid biosynthesis; L-histidine biosynthesis; L-histidine from 5-phospho-alpha-D-ribose 1-diphosphate: step 6/9. The polypeptide is Imidazoleglycerol-phosphate dehydratase (Mycobacterium avium (strain 104)).